Reading from the N-terminus, the 452-residue chain is CCA-adding enzyme (452 aa).

Residues S54 and R57 each contribute to the ATP site. CTP contacts are provided by S54 and R57. Mg(2+) contacts are provided by D66, D68, and D117. H140, K160, and Y169 together coordinate ATP. Residues H140, K160, and Y169 each coordinate CTP.

Belongs to the tRNA nucleotidyltransferase/poly(A) polymerase family. Archaeal CCA-adding enzyme subfamily. As to quaternary structure, homodimer. Requires Mg(2+) as cofactor.

The enzyme catalyses a tRNA precursor + 2 CTP + ATP = a tRNA with a 3' CCA end + 3 diphosphate. It carries out the reaction a tRNA with a 3' CCA end + 2 CTP + ATP = a tRNA with a 3' CCACCA end + 3 diphosphate. In terms of biological role, catalyzes the addition and repair of the essential 3'-terminal CCA sequence in tRNAs without using a nucleic acid template. Adds these three nucleotides in the order of C, C, and A to the tRNA nucleotide-73, using CTP and ATP as substrates and producing inorganic pyrophosphate. tRNA 3'-terminal CCA addition is required both for tRNA processing and repair. Also involved in tRNA surveillance by mediating tandem CCA addition to generate a CCACCA at the 3' terminus of unstable tRNAs. While stable tRNAs receive only 3'-terminal CCA, unstable tRNAs are marked with CCACCA and rapidly degraded. The protein is CCA-adding enzyme of Halobacterium salinarum (strain ATCC 29341 / DSM 671 / R1).